A 398-amino-acid chain; its full sequence is Probable peptidoglycan glycosyltransferase FtsW (398 aa).

At 1-20 (MSTQAIRGARGLVLKWGAGR) the chain is on the cytoplasmic side. The chain crosses the membrane as a helical span at residues 21 to 41 (FYLDTVLLSVSLGLMLFGFVM). Over 42–57 (VSSASLHLGEKMASDS) the chain is Periplasmic. The helical transmembrane segment at 58–78 (FYFPKHQLVHILLGLAAGWGA) threads the bilayer. Residues 79–92 (ARVRLDTLERHSRS) lie on the Cytoplasmic side of the membrane. The chain crosses the membrane as a helical span at residues 93–113 (LFWAGIALLVLVLIPGVGKSV). Residues 114–121 (NGSVRWIN) lie on the Periplasmic side of the membrane. The helical transmembrane segment at 122–142 (LFGLRVQVSEVFKLVAAIYVA) threads the bilayer. At 143-153 (GYISRHLDTVR) the chain is on the cytoplasmic side. Residues 154 to 174 (TSVKGMIFPLSLLAIGAVLLL) form a helical membrane-spanning segment. Residues 175–177 (KEP) lie on the Periplasmic side of the membrane. The helical transmembrane segment at 178 to 198 (DFGATAVVMATALGMLFLAGA) threads the bilayer. Residue Arg199 is a topological domain, cytoplasmic. A helical transmembrane segment spans residues 200-220 (LWVFVGLLGLVAVAGTVLIYT). Over 221-289 (AEYRLRRVLS…LFSVIGEELG (69 aa)) the chain is Periplasmic. The chain crosses the membrane as a helical span at residues 290–310 (LWGATTVILLFAIVVWRALAI). Residues 311 to 318 (GRLAERSG) are Cytoplasmic-facing. The helical transmembrane segment at 319–339 (NLFAAFLAYGIGIWLGLQSFI) threads the bilayer. Residues 340–355 (NMGVNMGMLPTKGLTL) lie on the Periplasmic side of the membrane. Residues 356–376 (PLMSYGGGSMMVVCAAIGLLF) form a helical membrane-spanning segment. Residues 377 to 398 (RIRSEAVASFLGNGRKGLWPGV) lie on the Cytoplasmic side of the membrane.

Belongs to the SEDS family. FtsW subfamily.

Its subcellular location is the cell inner membrane. It catalyses the reaction [GlcNAc-(1-&gt;4)-Mur2Ac(oyl-L-Ala-gamma-D-Glu-L-Lys-D-Ala-D-Ala)](n)-di-trans,octa-cis-undecaprenyl diphosphate + beta-D-GlcNAc-(1-&gt;4)-Mur2Ac(oyl-L-Ala-gamma-D-Glu-L-Lys-D-Ala-D-Ala)-di-trans,octa-cis-undecaprenyl diphosphate = [GlcNAc-(1-&gt;4)-Mur2Ac(oyl-L-Ala-gamma-D-Glu-L-Lys-D-Ala-D-Ala)](n+1)-di-trans,octa-cis-undecaprenyl diphosphate + di-trans,octa-cis-undecaprenyl diphosphate + H(+). Its pathway is cell wall biogenesis; peptidoglycan biosynthesis. Peptidoglycan polymerase that is essential for cell division. In Methylococcus capsulatus (strain ATCC 33009 / NCIMB 11132 / Bath), this protein is Probable peptidoglycan glycosyltransferase FtsW.